We begin with the raw amino-acid sequence, 160 residues long: MSDNDDIEVESDEEQPRFQSAADKRAHHNALERKRRDHIKDSFHSLRDSVPSLQGEKASRAQILDKATEYIQYMRRKNHTHQQDIDDLKRQNALLEQQVRALEKARSSAQLQTNYPSSDNSLYTNAKGGTISAFDGGSDSSSESEPEEPQNRKKLRMEAS.

A compositionally biased stretch (acidic residues) spans 1 to 13 (MSDNDDIEVESDE). The disordered stretch occupies residues 1 to 40 (MSDNDDIEVESDEEQPRFQSAADKRAHHNALERKRRDHIK). Ser-2 bears the N-acetylserine mark. A phosphoserine mark is found at Ser-2 and Ser-11. In terms of domain architecture, bHLH spans 23–74 (DKRAHHNALERKRRDHIKDSFHSLRDSVPSLQGEKASRAQILDKATEYIQYM). Residues 29-40 (NALERKRRDHIK) are compositionally biased toward basic and acidic residues. The residue at position 66 (Lys-66) is an N6-acetyllysine. The leucine-zipper stretch occupies residues 81–102 (HQQDIDDLKRQNALLEQQVRAL). Residues 105 to 160 (ARSSAQLQTNYPSSDNSLYTNAKGGTISAFDGGSDSSSESEPEEPQNRKKLRMEAS) form a disordered region. The residue at position 107 (Ser-107) is a Phosphoserine. Polar residues predominate over residues 107-124 (SSAQLQTNYPSSDNSLYT). N6-acetyllysine is present on residues Lys-153 and Lys-154.

It belongs to the MAX family. Efficient DNA binding requires dimerization with another bHLH protein. Binds DNA as a heterodimer with MYC or MAD. Part of the E2F6.com-1 complex in G0 phase composed of E2F6, MGA, MAX, TFDP1, CBX3, BAT8, EUHMTASE1, RING1, RNF2, MBLR, L3MBTL2 and YAF2. Component of some MLL1/MLL complex, at least composed of the core components KMT2A/MLL1, ASH2L, HCFC1/HCF1, WDR5 and RBBP5, as well as the facultative components BACC1, CHD8, E2F6, HSP70, INO80C, KANSL1, LAS1L, MAX, MCRS1, MGA, MYST1/MOF, PELP1, PHF20, PRP31, RING2, RUVB1/TIP49A, RUVB2/TIP49B, SENP3, TAF1, TAF4, TAF6, TAF7, TAF9 and TEX10. Interacts with SPAG9. The heterodimer MYC:MAX interacts with ABI1; the interaction may enhance MYC:MAX transcriptional activity. Phosphorylated.

It localises to the nucleus. It is found in the cell projection. The protein resides in the dendrite. Its function is as follows. Transcription regulator. Forms a sequence-specific DNA-binding protein complex with MYC or MAD which recognizes the core sequence 5'-CAC[GA]TG-3'. The MYC:MAX complex is a transcriptional activator, whereas the MAD:MAX complex is a repressor. May repress transcription via the recruitment of a chromatin remodeling complex containing H3 'Lys-9' histone methyltransferase activity. Represses MYC transcriptional activity from E-box elements. This Rattus norvegicus (Rat) protein is Protein max.